The following is a 420-amino-acid chain: CinA-like protein (420 aa).

The protein belongs to the CinA family.

The polypeptide is CinA-like protein (Chlorobium phaeobacteroides (strain BS1)).